A 138-amino-acid polypeptide reads, in one-letter code: Ferredoxin-2 (138 aa).

Residues 27–117 enclose the 2Fe-2S ferredoxin-type domain; that stretch reads ADANLQSTDF…DAKIVYNLKH (91 aa). Residues Cys-62, Cys-67, Cys-70, and Cys-100 each contribute to the [2Fe-2S] cluster site.

It belongs to the 2Fe2S plant-type ferredoxin family. Requires [2Fe-2S] cluster as cofactor.

Functionally, ferredoxins are iron-sulfur proteins that transfer electrons in a wide variety of metabolic reactions. This is Ferredoxin-2 (fer2) from Haloarcula marismortui (strain ATCC 43049 / DSM 3752 / JCM 8966 / VKM B-1809) (Halobacterium marismortui).